A 523-amino-acid chain; its full sequence is Anthranilate synthase component 1 (523 aa).

Residues S45 and 296 to 298 (PYM) each bind L-tryptophan. Chorismate is bound at residue 333–334 (GT). E366 serves as a coordination point for Mg(2+). Residues Y454, R474, 488–490 (GAG), and G490 each bind chorismate. E503 contributes to the Mg(2+) binding site.

It belongs to the anthranilate synthase component I family. As to quaternary structure, heterotetramer consisting of two non-identical subunits: a beta subunit (TrpG) and a large alpha subunit (TrpE). Mg(2+) serves as cofactor.

The enzyme catalyses chorismate + L-glutamine = anthranilate + pyruvate + L-glutamate + H(+). Its pathway is amino-acid biosynthesis; L-tryptophan biosynthesis; L-tryptophan from chorismate: step 1/5. Feedback inhibited by tryptophan. In terms of biological role, part of a heterotetrameric complex that catalyzes the two-step biosynthesis of anthranilate, an intermediate in the biosynthesis of L-tryptophan. In the first step, the glutamine-binding beta subunit (TrpG) of anthranilate synthase (AS) provides the glutamine amidotransferase activity which generates ammonia as a substrate that, along with chorismate, is used in the second step, catalyzed by the large alpha subunit of AS (TrpE) to produce anthranilate. In the absence of TrpG, TrpE can synthesize anthranilate directly from chorismate and high concentrations of ammonia. In Vibrio cholerae serotype O1 (strain ATCC 39315 / El Tor Inaba N16961), this protein is Anthranilate synthase component 1 (trpE).